Reading from the N-terminus, the 117-residue chain is Putative pterin-4-alpha-carbinolamine dehydratase (117 aa).

This sequence belongs to the pterin-4-alpha-carbinolamine dehydratase family.

The enzyme catalyses (4aS,6R)-4a-hydroxy-L-erythro-5,6,7,8-tetrahydrobiopterin = (6R)-L-erythro-6,7-dihydrobiopterin + H2O. The protein is Putative pterin-4-alpha-carbinolamine dehydratase of Colwellia psychrerythraea (strain 34H / ATCC BAA-681) (Vibrio psychroerythus).